The sequence spans 124 residues: Prefoldin subunit beta (124 aa).

This sequence belongs to the prefoldin subunit beta family. Heterohexamer of two alpha and four beta subunits.

Its subcellular location is the cytoplasm. In terms of biological role, molecular chaperone capable of stabilizing a range of proteins. Seems to fulfill an ATP-independent, HSP70-like function in archaeal de novo protein folding. This chain is Prefoldin subunit beta, found in Pyrobaculum arsenaticum (strain DSM 13514 / JCM 11321 / PZ6).